The primary structure comprises 367 residues: 4-hydroxy-3-methylbut-2-en-1-yl diphosphate synthase (flavodoxin) (367 aa).

Residues Cys268, Cys271, Cys303, and Glu310 each contribute to the [4Fe-4S] cluster site.

The protein belongs to the IspG family. [4Fe-4S] cluster serves as cofactor.

It carries out the reaction (2E)-4-hydroxy-3-methylbut-2-enyl diphosphate + oxidized [flavodoxin] + H2O + 2 H(+) = 2-C-methyl-D-erythritol 2,4-cyclic diphosphate + reduced [flavodoxin]. It functions in the pathway isoprenoid biosynthesis; isopentenyl diphosphate biosynthesis via DXP pathway; isopentenyl diphosphate from 1-deoxy-D-xylulose 5-phosphate: step 5/6. Converts 2C-methyl-D-erythritol 2,4-cyclodiphosphate (ME-2,4cPP) into 1-hydroxy-2-methyl-2-(E)-butenyl 4-diphosphate. This chain is 4-hydroxy-3-methylbut-2-en-1-yl diphosphate synthase (flavodoxin), found in Halalkalibacterium halodurans (strain ATCC BAA-125 / DSM 18197 / FERM 7344 / JCM 9153 / C-125) (Bacillus halodurans).